The chain runs to 492 residues: N-succinylglutamate 5-semialdehyde dehydrogenase (492 aa).

220–225 is a binding site for NAD(+); that stretch reads GSASTG. Active-site residues include glutamate 243 and cysteine 277.

It belongs to the aldehyde dehydrogenase family. AstD subfamily.

It catalyses the reaction N-succinyl-L-glutamate 5-semialdehyde + NAD(+) + H2O = N-succinyl-L-glutamate + NADH + 2 H(+). It functions in the pathway amino-acid degradation; L-arginine degradation via AST pathway; L-glutamate and succinate from L-arginine: step 4/5. Catalyzes the NAD-dependent reduction of succinylglutamate semialdehyde into succinylglutamate. This is N-succinylglutamate 5-semialdehyde dehydrogenase from Salmonella heidelberg (strain SL476).